The primary structure comprises 37 residues: Bacteriocin lactococcin MMFII (37 aa).

An intrachain disulfide couples Cys-9 to Cys-14.

The protein resides in the secreted. Bacteriocin active against Listeria monocytogenes and Lactococcus cremoris. This is Bacteriocin lactococcin MMFII from Lactococcus lactis subsp. lactis (Streptococcus lactis).